Reading from the N-terminus, the 312-residue chain is Taste receptor type 2 member 7 (312 aa).

Residues 1–9 are Extracellular-facing; it reads MTYETDTTL. Residues 10 to 30 traverse the membrane as a helical segment; the sequence is MFVAVCEALVGILGNAFIALV. Over 31-49 the chain is Cytoplasmic; that stretch reads NFMGWMKNRKITAIDLILS. A helical transmembrane segment spans residues 50 to 70; it reads SLAMSRICLQCIILLDCIILV. Over 71 to 101 the chain is Extracellular; the sequence is QYPDTYNRGKEMRIIDFFWTLTNHLSVWFAT. A helical transmembrane segment spans residues 102–122; that stretch reads CLSIFYFFKIANFFHPLFLWI. Residues 123-128 lie on the Cytoplasmic side of the membrane; it reads KWRIDK. A helical transmembrane segment spans residues 129-149; sequence LILRTLLACLILSLCFSLPVT. At 150–187 the chain is on the extracellular side; that stretch reads ENLTDDFRRCVKTKERINSTLRCKLNKAGYASVKVNLN. Asn-151 and Asn-167 each carry an N-linked (GlcNAc...) asparagine glycan. The helical transmembrane segment at 188–208 threads the bilayer; that stretch reads LVMLFPFSVSLVSFLLLILSL. At 209 to 235 the chain is on the cytoplasmic side; that stretch reads WRHTRQMQLNVTGYNDPSTTAHVKATK. Residues 236–256 traverse the membrane as a helical segment; sequence AVISFLVLFIVYCLAFLIATS. Topologically, residues 257 to 266 are extracellular; that stretch reads SYFMPESELA. A helical transmembrane segment spans residues 267 to 287; that stretch reads VIWGELIALIYPSSHSFILIL. The Cytoplasmic portion of the chain corresponds to 288 to 312; the sequence is GNSKLKQASVRVLCRVKTMLKGRKY.

It belongs to the G-protein coupled receptor T2R family. Expressed in subsets of taste receptor cells of the tongue and palate epithelium and exclusively in gustducin-positive cells. Expressed in 15% taste bud cells in circumvallate and foliate papillae but only in 2% in fungiform papillae. Expressed in the duodenum, antrum and fundus (part of the stomach) and in gastric endocrine cells.

Its subcellular location is the membrane. Its function is as follows. Gustducin-coupled receptor implicated in the perception of bitter compounds in the oral cavity and the gastrointestinal tract. Signals through PLCB2 and the calcium-regulated cation channel TRPM5. The sequence is that of Taste receptor type 2 member 7 (Tas2r7) from Rattus norvegicus (Rat).